Consider the following 310-residue polypeptide: N-acetylmuramic acid 6-phosphate etherase (310 aa).

In terms of domain architecture, SIS spans 64–227 (ITARLKSKGR…STSVMIKLGK (164 aa)). Glu-92 acts as the Proton donor in catalysis. Glu-123 is a catalytic residue.

The protein belongs to the GCKR-like family. MurNAc-6-P etherase subfamily. Homodimer.

The enzyme catalyses N-acetyl-D-muramate 6-phosphate + H2O = N-acetyl-D-glucosamine 6-phosphate + (R)-lactate. The protein operates within amino-sugar metabolism; N-acetylmuramate degradation. In terms of biological role, specifically catalyzes the cleavage of the D-lactyl ether substituent of MurNAc 6-phosphate, producing GlcNAc 6-phosphate and D-lactate. The polypeptide is N-acetylmuramic acid 6-phosphate etherase (Prochlorococcus marinus (strain NATL1A)).